A 158-amino-acid chain; its full sequence is Rhombotin-2 (158 aa).

LIM zinc-binding domains follow at residues 30–89 (CGGC…RLFG) and 94–153 (CASC…EWTK).

In terms of assembly, interacts via its LIM domains with ELF2 and LDB1. Interacts with BEX2 and KDM5A. Also interacts with basic helix-loop-helix protein TAL1/SCL and can assemble in a complex with LMO2 and TAL1/SCL.

The protein resides in the nucleus. In terms of biological role, acts with TAL1/SCL to regulate red blood cell development. Also acts with LDB1 to maintain erythroid precursors in an immature state. The protein is Rhombotin-2 (LMO2) of Bos taurus (Bovine).